Here is a 590-residue protein sequence, read N- to C-terminus: Monoterepene synthase TPS1, chloropastic (590 aa).

The transit peptide at 1 to 42 (MALNTFLHFPPCSLSSFSCAVPKLPLAIFHKTMARQIRCPRA) directs the protein to the chloroplast. Residues R304, D341, D345, R483, and D486 each contribute to the (2E)-geranyl diphosphate site. 2 residues coordinate Mg(2+): D341 and D345. Positions 341 to 345 (DDMYD) match the DDXXD motif motif. D486, T490, and E494 together coordinate Mg(2+).

The protein belongs to the terpene synthase family. Tpsb subfamily. In terms of assembly, monomer. It depends on Mg(2+) as a cofactor.

It is found in the plastid. The protein resides in the chloroplast. It carries out the reaction (2E)-geranyl diphosphate = beta-thujene + diphosphate. The catalysed reaction is (2E)-geranyl diphosphate = sabinene + diphosphate. It catalyses the reaction (2E)-geranyl diphosphate = beta-pinene + diphosphate. The enzyme catalyses (2E)-geranyl diphosphate = alpha-terpinene + diphosphate. It participates in secondary metabolite biosynthesis; terpenoid biosynthesis. Monoterpene synthase involved in the biosynthesis of volatile organic compounds. Mediates the conversion of (2E)-geranyl diphosphate (GPP) into beta-thujene, sabinene, beta-pinene and alpha-terpinene. Does not use (2E,6E)-farnesyl diphosphate (FPP) as substrate. The polypeptide is Monoterepene synthase TPS1, chloropastic (Cananga odorata (Ylang-ylang tree)).